Reading from the N-terminus, the 230-residue chain is Large ribosomal subunit protein uL1 (230 aa).

It belongs to the universal ribosomal protein uL1 family. As to quaternary structure, part of the 50S ribosomal subunit.

Binds directly to 23S rRNA. The L1 stalk is quite mobile in the ribosome, and is involved in E site tRNA release. Its function is as follows. Protein L1 is also a translational repressor protein, it controls the translation of the L11 operon by binding to its mRNA. The chain is Large ribosomal subunit protein uL1 from Thermoanaerobacter sp. (strain X514).